The sequence spans 124 residues: Large ribosomal subunit protein bL12 (124 aa).

This sequence belongs to the bacterial ribosomal protein bL12 family. In terms of assembly, homodimer. Part of the ribosomal stalk of the 50S ribosomal subunit. Forms a multimeric L10(L12)X complex, where L10 forms an elongated spine to which 2 to 4 L12 dimers bind in a sequential fashion. Binds GTP-bound translation factors.

Functionally, forms part of the ribosomal stalk which helps the ribosome interact with GTP-bound translation factors. Is thus essential for accurate translation. The sequence is that of Large ribosomal subunit protein bL12 from Paracoccus denitrificans (strain Pd 1222).